Reading from the N-terminus, the 571-residue chain is Proline--tRNA ligase (571 aa).

Belongs to the class-II aminoacyl-tRNA synthetase family. ProS type 1 subfamily. As to quaternary structure, homodimer.

It localises to the cytoplasm. The catalysed reaction is tRNA(Pro) + L-proline + ATP = L-prolyl-tRNA(Pro) + AMP + diphosphate. In terms of biological role, catalyzes the attachment of proline to tRNA(Pro) in a two-step reaction: proline is first activated by ATP to form Pro-AMP and then transferred to the acceptor end of tRNA(Pro). As ProRS can inadvertently accommodate and process non-cognate amino acids such as alanine and cysteine, to avoid such errors it has two additional distinct editing activities against alanine. One activity is designated as 'pretransfer' editing and involves the tRNA(Pro)-independent hydrolysis of activated Ala-AMP. The other activity is designated 'posttransfer' editing and involves deacylation of mischarged Ala-tRNA(Pro). The misacylated Cys-tRNA(Pro) is not edited by ProRS. This Histophilus somni (strain 129Pt) (Haemophilus somnus) protein is Proline--tRNA ligase.